Reading from the N-terminus, the 198-residue chain is KHSLPDLPYDYGALEPHINAQIMQLHHSKHHAAYVNNLNVTEEKYQEALAKGDVTAQIALQPALKFNGGGHINHSIFWTNLSPNGGGEPKGELLEAIKRDFGSFDKFKEKLTAASVGVQGSGWGWLGFNKERGHLQIAACPNQDPLQGTTGLIPLLGIDVWEHAYYLQYKNVRPDYLKAIWNVINWENVTERYMACKK.

A Mn(2+)-binding site is contributed by histidine 26. Residue tyrosine 34 is modified to 3'-nitrotyrosine. N6-acetyllysine; alternate occurs at positions 44 and 51. 2 positions are modified to N6-succinyllysine; alternate: lysine 44 and lysine 51. Histidine 74 contacts Mn(2+). At lysine 90 the chain carries N6-acetyllysine. N6-acetyllysine; alternate is present on residues lysine 98 and lysine 106. N6-succinyllysine; alternate is present on residues lysine 98 and lysine 106. Aspartate 159 and histidine 163 together coordinate Mn(2+). Lysine 178 carries the post-translational modification N6-acetyllysine.

It belongs to the iron/manganese superoxide dismutase family. As to quaternary structure, homotetramer. It depends on Mn(2+) as a cofactor. In terms of processing, nitrated under oxidative stress. Nitration coupled with oxidation inhibits the catalytic activity. Post-translationally, acetylation at Lys-98 decreases enzymatic activity. Deacetylated by SIRT3 upon exposure to ionizing radiations or after long fasting. Polyubiquitinated; leading to proteasomal degradation. Deubiquitinated by USP36 which increases protein stability.

It localises to the mitochondrion matrix. It carries out the reaction 2 superoxide + 2 H(+) = H2O2 + O2. Destroys superoxide anion radicals which are normally produced within the cells and which are toxic to biological systems. This is Superoxide dismutase [Mn], mitochondrial (SOD2) from Pan troglodytes (Chimpanzee).